Here is a 119-residue protein sequence, read N- to C-terminus: uncharacterized protein (119 aa).

The next 2 membrane-spanning stretches (helical) occupy residues A53–A73 and F92–F112.

The protein resides in the membrane. This is an uncharacterized protein from Saccharomyces cerevisiae (strain ATCC 204508 / S288c) (Baker's yeast).